We begin with the raw amino-acid sequence, 121 residues long: Basic phospholipase A2 CoaTx-II (121 aa).

Disulfide bonds link Cys26–Cys115, Cys28–Cys44, Cys43–Cys95, Cys49–Cys121, Cys50–Cys88, Cys57–Cys81, and Cys75–Cys86. Residues 105–117 are important for membrane-damaging activities in eukaryotes and bacteria; heparin-binding; that stretch reads KKYRIYPKFLCKK.

This sequence belongs to the phospholipase A2 family. Group II subfamily. K49 sub-subfamily. Homodimer; non-covalently-linked. As to expression, expressed by the venom gland.

It localises to the secreted. Its function is as follows. Snake venom phospholipase A2 (PLA2) that lacks enzymatic inactivity. It shows antibacterial activity against both Gram-negative and Gram-positive bacteria, including methicillin-resistant strains. In vivo, it causes local muscular damage, but no systemic damage (intravenous administration does not elevate plasma creatine kinase). Also causes an inflammatory activity that is demonstrated by mice paw edema induction and pro-inflammatory cytokine IL-6 elevation. A model of myotoxic mechanism has been proposed: an apo Lys49-PLA2 is activated by the entrance of a hydrophobic molecule (e.g. fatty acid) at the hydrophobic channel of the protein leading to a reorientation of a monomer. This reorientation causes a transition between 'inactive' to 'active' states, causing alignment of C-terminal and membrane-docking sites (MDoS) side-by-side and putting the membrane-disruption sites (MDiS) in the same plane, exposed to solvent and in a symmetric position for both monomers. The MDoS region stabilizes the toxin on membrane by the interaction of charged residues with phospholipid head groups. Subsequently, the MDiS region destabilizes the membrane with penetration of hydrophobic residues. This insertion causes a disorganization of the membrane, allowing an uncontrolled influx of ions (i.e. calcium and sodium), and eventually triggering irreversible intracellular alterations and cell death. The protein is Basic phospholipase A2 CoaTx-II of Crotalus lutosus abyssus (Grand Canyon rattlesnake).